A 187-amino-acid polypeptide reads, in one-letter code: UPF0301 protein KPK_0728 (187 aa).

The protein belongs to the UPF0301 (AlgH) family.

The polypeptide is UPF0301 protein KPK_0728 (Klebsiella pneumoniae (strain 342)).